A 263-amino-acid polypeptide reads, in one-letter code: Polyamine aminopropyltransferase (263 aa).

Positions Met-1–Lys-221 constitute a PABS domain. Residues Asp-98 and Asp-126–Gly-127 each bind S-methyl-5'-thioadenosine. The active-site Proton acceptor is Asp-144.

The protein belongs to the spermidine/spermine synthase family. As to quaternary structure, homodimer or homotetramer.

It is found in the cytoplasm. It catalyses the reaction S-adenosyl 3-(methylsulfanyl)propylamine + putrescine = S-methyl-5'-thioadenosine + spermidine + H(+). Its pathway is amine and polyamine biosynthesis; spermidine biosynthesis; spermidine from putrescine: step 1/1. In terms of biological role, catalyzes the irreversible transfer of a propylamine group from the amino donor S-adenosylmethioninamine (decarboxy-AdoMet) to putrescine (1,4-diaminobutane) to yield spermidine. This is Polyamine aminopropyltransferase from Neisseria meningitidis serogroup A / serotype 4A (strain DSM 15465 / Z2491).